Here is a 245-residue protein sequence, read N- to C-terminus: MLRIDIVTIFPEMFKGPFDVSILKKAQDKGLVEIKVYNLRDFTEDKHRTVDDYPYGGGSGMVMKPEPIFKAVRSLKKEDSEVILLSPSGDLFNQKIAEELSKKNHLILICGRYEGVDERVKSIITREISIGDYVLTGGEIPAMVIVDAVVRLVPGVLGDPDSLREESFQWGILEYPQYTHPRDFEGMKVPDILLSGNHERIRRWRRKEALKKTFLKRPDLLEKTSLTQEDLELLEEIKKELREEV.

S-adenosyl-L-methionine-binding positions include Gly111 and 130 to 135 (IGDYVL).

It belongs to the RNA methyltransferase TrmD family. As to quaternary structure, homodimer.

The protein resides in the cytoplasm. The enzyme catalyses guanosine(37) in tRNA + S-adenosyl-L-methionine = N(1)-methylguanosine(37) in tRNA + S-adenosyl-L-homocysteine + H(+). Functionally, specifically methylates guanosine-37 in various tRNAs. The chain is tRNA (guanine-N(1)-)-methyltransferase from Dictyoglomus turgidum (strain DSM 6724 / Z-1310).